Consider the following 607-residue polypeptide: Cytosolic Fe-S cluster assembly factor NAR1 (607 aa).

Residues Cys-20, Cys-82, Cys-85, Cys-88, Cys-204, and Cys-259 each coordinate [4Fe-4S] cluster. The tract at residues 430–476 (KPNTGKSTNTTTTTTKSKVNPLAARRRARIANNRGKPETKSTSEVNS) is disordered. The span at 432-447 (NTGKSTNTTTTTTKSK) shows a compositional bias: low complexity. [4Fe-4S] cluster-binding residues include Cys-496 and Cys-500.

It belongs to the NARF family.

Functionally, component of the cytosolic Fe/S protein assembly machinery. Required for maturation of extramitochondrial Fe/S proteins. May play a role in the transfer of pre-assembled Fe/S clusters to target apoproteins. The chain is Cytosolic Fe-S cluster assembly factor NAR1 (NAR1) from Candida albicans (strain SC5314 / ATCC MYA-2876) (Yeast).